Reading from the N-terminus, the 81-residue chain is Adenoregulin-related peptide (81 aa).

An N-terminal signal peptide occupies residues 1–22 (MAFLKKSLLLVLFLGLVSLSIC). A propeptide spanning residues 23–43 (EEEKRENEDEEEQEDDEQSEM) is cleaved from the precursor. The segment at 24–46 (EEKRENEDEEEQEDDEQSEMKRG) is disordered. The segment covering 30-40 (EDEEEQEDDEQ) has biased composition (acidic residues). Ile78 is subject to Isoleucine amide. Positions 79–81 (GEQ) are excised as a propeptide.

As to expression, expressed by the skin glands.

It is found in the secreted. Has antibacterial activity against Gram-positive bacterium M.luteus NCT C2665 and against Gram-negative bacterium E.coli K12D31. The polypeptide is Adenoregulin-related peptide (Agalychnis callidryas (Red-eyed tree frog)).